The chain runs to 318 residues: 5'-3' exonuclease (318 aa).

One can recognise a 5'-3' exonuclease domain in the interval 194-278 (AYAELALLRG…ATDAPVTLST (85 aa)).

Functionally, 5'-3' exonuclease acting preferentially on double-stranded DNA. This Mycobacterium tuberculosis (strain ATCC 25618 / H37Rv) protein is 5'-3' exonuclease.